We begin with the raw amino-acid sequence, 402 residues long: GPI mannosyltransferase 1 (402 aa).

The next 10 helical transmembrane spans lie at 5–25, 79–99, 108–128, 162–182, 191–211, 238–258, 260–280, 309–329, 333–353, and 365–385; these read VILL…YGIF, WIHM…VMII, LTKQ…ITIS, LSIH…IYLL, IWRL…PTYF, FSIW…SQSI, LSKL…YLLW, QYFI…TITW, VVCI…AYLL, and LFFG…VFIT.

It belongs to the PIGM family.

Its subcellular location is the endoplasmic reticulum membrane. Its pathway is glycolipid biosynthesis; glycosylphosphatidylinositol-anchor biosynthesis. Mannosyltransferase involved in glycosylphosphatidylinositol-anchor biosynthesis. Transfers the first alpha-1,4-mannose to GlcN-acyl-PI during GPI precursor assembly. Required for cell wall integrity. This is GPI mannosyltransferase 1 (GPI14) from Kluyveromyces lactis (strain ATCC 8585 / CBS 2359 / DSM 70799 / NBRC 1267 / NRRL Y-1140 / WM37) (Yeast).